Consider the following 294-residue polypeptide: MLDENEDIHPLFAGAPATTEFKKLRKRIVRYTREAIEQYGMVERRADGSTPKWLVCLSGGKDSYTLLAVLYELKWRGLLPVDLLACNLDQGQPGFPSTVLPEFLDRMGVPNRIEYQDTYSVVVDKVPQGRTYCALCSRLRRGNLYRIAREEGCSAVVLGHHRDDILETFFMNLFHGGRLATMPPKLVNEEGDLFVFRPLAHVAEADCEKFARAMNYPIIPCDLCGSQDGLQRQQVKQILDGWEKNRPGRRQVMFRALMNARPSHLLDPKLFDFQGLELGSREKGENFGEIPLLR.

Positions 58–63 match the PP-loop motif motif; sequence SGGKDS. [4Fe-4S] cluster is bound by residues Cys-133, Cys-136, and Cys-224.

It belongs to the TtcA family. As to quaternary structure, homodimer. Requires Mg(2+) as cofactor. It depends on [4Fe-4S] cluster as a cofactor.

The protein localises to the cytoplasm. It carries out the reaction cytidine(32) in tRNA + S-sulfanyl-L-cysteinyl-[cysteine desulfurase] + AH2 + ATP = 2-thiocytidine(32) in tRNA + L-cysteinyl-[cysteine desulfurase] + A + AMP + diphosphate + H(+). The protein operates within tRNA modification. In terms of biological role, catalyzes the ATP-dependent 2-thiolation of cytidine in position 32 of tRNA, to form 2-thiocytidine (s(2)C32). The sulfur atoms are provided by the cysteine/cysteine desulfurase (IscS) system. This is tRNA-cytidine(32) 2-sulfurtransferase from Ruegeria pomeroyi (strain ATCC 700808 / DSM 15171 / DSS-3) (Silicibacter pomeroyi).